Consider the following 66-residue polypeptide: Large ribosomal subunit protein bL33c (66 aa).

Belongs to the bacterial ribosomal protein bL33 family.

It is found in the plastid. The protein resides in the chloroplast. The sequence is that of Large ribosomal subunit protein bL33c from Barbarea verna (Land cress).